Consider the following 151-residue polypeptide: 3-hydroxyacyl-[acyl-carrier-protein] dehydratase FabZ (151 aa).

Residue His56 is part of the active site.

It belongs to the thioester dehydratase family. FabZ subfamily.

The protein resides in the cytoplasm. It catalyses the reaction a (3R)-hydroxyacyl-[ACP] = a (2E)-enoyl-[ACP] + H2O. In terms of biological role, involved in unsaturated fatty acids biosynthesis. Catalyzes the dehydration of short chain beta-hydroxyacyl-ACPs and long chain saturated and unsaturated beta-hydroxyacyl-ACPs. This is 3-hydroxyacyl-[acyl-carrier-protein] dehydratase FabZ from Rhodopseudomonas palustris (strain BisB18).